The primary structure comprises 430 residues: Adenylosuccinate synthetase (430 aa).

Residues 12–18 and 40–42 contribute to the GTP site; these read GDEGKGK and GHT. Asp13 (proton acceptor) is an active-site residue. 2 residues coordinate Mg(2+): Asp13 and Gly40. IMP is bound by residues 13–16, 38–41, Thr128, Arg142, Gln223, Thr238, and Arg302; these read DEGK and NAGH. His41 acts as the Proton donor in catalysis. A substrate-binding site is contributed by 298–304; it reads TVTKRPR. GTP-binding positions include Arg304, 330–332, and 412–414; these read CVD and SVG.

The protein belongs to the adenylosuccinate synthetase family. As to quaternary structure, homodimer. Mg(2+) serves as cofactor.

It localises to the cytoplasm. The enzyme catalyses IMP + L-aspartate + GTP = N(6)-(1,2-dicarboxyethyl)-AMP + GDP + phosphate + 2 H(+). Its pathway is purine metabolism; AMP biosynthesis via de novo pathway; AMP from IMP: step 1/2. Its function is as follows. Plays an important role in the de novo pathway of purine nucleotide biosynthesis. Catalyzes the first committed step in the biosynthesis of AMP from IMP. In Ligilactobacillus salivarius (strain UCC118) (Lactobacillus salivarius), this protein is Adenylosuccinate synthetase.